The sequence spans 1055 residues: Type I restriction enzyme HindI endonuclease subunit (1055 aa).

The Helicase ATP-binding domain occupies 287–468 (TSEKGDRRIG…QDVFGRYVSI (182 aa)).

It belongs to the HsdR family. The type I restriction/modification system is composed of three polypeptides R, M and S; the restriction enzyme has stoichiometry R(2)M(2)S(1) while the methyltransferase is M(2)S(1).

The catalysed reaction is Endonucleolytic cleavage of DNA to give random double-stranded fragments with terminal 5'-phosphates, ATP is simultaneously hydrolyzed.. In terms of biological role, the restriction (R) subunit of a type I restriction enzyme that recognizes 5'-RAACN(5)TAG-3' and cleaves a random distance away. Subunit R is required for both nuclease and ATPase activities, but not for modification. After locating a non-methylated recognition site, the enzyme complex serves as a molecular motor that translocates DNA in an ATP-dependent manner until a collision occurs that triggers cleavage. The sequence is that of Type I restriction enzyme HindI endonuclease subunit from Haemophilus influenzae (strain ATCC 51907 / DSM 11121 / KW20 / Rd).